We begin with the raw amino-acid sequence, 905 residues long: MSKENINLPKTAFSMKANLQNKEPEILEYWKKIDLYKELRKSNKGKEKFILHDGPPYANGNIHMGTALNKILKDIIVKFHQMDGKDSVYVPGWDCHGLPIEWKIEEQYKKNKKNKNEVPITEFRKECREFAEKWIEVHKTQFKRLGVVGDWENHYATMSFEAEAQIVRELGKFLKEGSLYRGFKPVLWSTVEKTALADAEVEYQDHKSDTIYTAFPVKKTNIKELENTDVIIWTTTPWTIPANKALAYNEALDYLIIELGDEGDFKNKKIVVAEALLESVIKDCEIKSYKEIKKFKGKDFKDTICSHPFLELGYDYDIPMLEARFVTTEQGTGIVHCAPSHGPDDFNLCLKYGIKAIETVDGDGKYTKNLPLFEGTHIFKANPIVIEKLKEQKKLLSNGELVHSYPHSWRSKAPLVHRATPQWFISMESHGLRKKALKALDDTKFYPDKGRERIKAMIETRPDWCVSRQRVWGVPLPIFVHKTTKEILVDDNVNENIASIYEKEGSDCWFSDSPQRFLGDKYKAEDYEKISDIVEVWFDSGCTHAFVLEKREDLQWPASMYLEGSDQHRGWFHSSLLESCGTRGRAPYESILSHGFVVDGKGLKMSKSVGNVIAPEDILKKYGADILRIWVASSNYAEDLRIDYSILEQHADSYRKIRNTFRYLLGNLNDDFQKIDLESLDIKQLPELERYMLHRVYELNNNFKNYFKSYDFHNLYKELLNFCTVDLSSFYFDIRKDALYCDSKNSDRRKSSIVVLNIILESLVKWFAPILSFTTEEIFTLINKEQKSIHLEQFMKYPESFQDEELHKKWIELKKIRDICNISIEAKRASKEIGSSLEASLIINLNKSLFEISKNVDFSEICITSSALVHQSNTDEIIIKTIKAEGNKCPVCWKINKVKCERHSD.

Residues Pro-56 to Thr-66 carry the 'HIGH' region motif. Glu-563 contacts L-isoleucyl-5'-AMP. The 'KMSKS' region motif lies at Lys-604 to Ser-608. Lys-607 is a binding site for ATP.

It belongs to the class-I aminoacyl-tRNA synthetase family. IleS type 1 subfamily. In terms of assembly, monomer.

Its subcellular location is the cytoplasm. It carries out the reaction tRNA(Ile) + L-isoleucine + ATP = L-isoleucyl-tRNA(Ile) + AMP + diphosphate. Functionally, catalyzes the attachment of isoleucine to tRNA(Ile). As IleRS can inadvertently accommodate and process structurally similar amino acids such as valine, to avoid such errors it has two additional distinct tRNA(Ile)-dependent editing activities. One activity is designated as 'pretransfer' editing and involves the hydrolysis of activated Val-AMP. The other activity is designated 'posttransfer' editing and involves deacylation of mischarged Val-tRNA(Ile). The sequence is that of Isoleucine--tRNA ligase from Pelagibacter ubique (strain HTCC1062).